A 68-amino-acid polypeptide reads, in one-letter code: EPYLQVDFHTEMKEESGIAFHFQVHFGCYVVMNSREYGAWKKPVESKNMPFQDGQEFDLSISVLPDKY.

Residues 1-68 form the Galectin domain; it reads EPYLQVDFHT…LSISVLPDKY (68 aa).

As to quaternary structure, interacts with CEL.

The protein resides in the cytoplasm. Its subcellular location is the cytosol. It is found in the cytoplasmic granule. Functionally, regulates immune responses through the recognition of cell-surface glycans. Essential for the anergy and suppressive function of CD25-positive regulatory T-cells (Treg). The protein is Galectin-10 (CLC) of Pongo pygmaeus (Bornean orangutan).